The primary structure comprises 723 residues: Phenylalanine ammonia-lyase (723 aa).

Tyrosine 77 (proton donor/acceptor) is an active-site residue. A cross-link (5-imidazolinone (Ala-Gly)) is located at residues alanine 182 to glycine 184. Position 183 is a 2,3-didehydroalanine (Ser) (serine 183). The (E)-cinnamate site is built by asparagine 241, glutamine 336, arginine 342, asparagine 372, lysine 443, glutamate 471, and asparagine 474.

Belongs to the PAL/histidase family. Contains an active site 4-methylidene-imidazol-5-one (MIO), which is formed autocatalytically by cyclization and dehydration of residues Ala-Ser-Gly.

The protein resides in the cytoplasm. The catalysed reaction is L-phenylalanine = (E)-cinnamate + NH4(+). The protein operates within secondary metabolite biosynthesis. Its pathway is phenylpropanoid metabolism; trans-cinnamate biosynthesis; trans-cinnamate from L-phenylalanine: step 1/1. Its function is as follows. Phenylalanine ammonia-lyase; part of the gene cluster that mediates the biosynthesis of squalestatin S1 (SQS1, also known as zaragozic acid A), a heavily oxidized fungal polyketide that offers potent cholesterol lowering activity by targeting squalene synthase (SS). SQS1 is composed of a 2,8-dioxobicyclic[3.2.1]octane-3,4,5-tricarboxyclic acid core that is connected to two lipophilic polyketide arms. These initial steps feature the priming of an unusual benzoic acid starter unit onto the highly reducing polyketide synthase clz14, followed by oxaloacetate extension and product release to generate a tricarboxylic acid containing product. The phenylalanine ammonia lyase (PAL) clz10 and the acyl-CoA ligase clz12 are involved in transforming phenylalanine into benzoyl-CoA. The citrate synthase-like protein clz17 is involved in connecting the C-alpha-carbons of the hexaketide chain and oxaloacetate to afford the tricarboxylic acid unit. The potential hydrolytic enzymes, clz11 and clz13, are in close proximity to pks2 and may participate in product release. On the other side, the tetraketide arm is synthesized by a the squalestatin tetraketide synthase clz2 and enzymatically esterified to the core in the last biosynthetic step, by the acetyltransferase clz6. The biosynthesis of the tetraketide must involve 3 rounds of chain extension. After the first and second rounds methyl-transfer occurs, and in all rounds of extension the ketoreductase and dehydratase are active. The enoyl reductase and C-MeT of clz2 are not active in the final round of extension. The acetyltransferase clz6 appears to have a broad substrate selectivity for its acyl CoA substrate, allowing the in vitro synthesis of novel squalestatins. The biosynthesis of SQS1 requires several oxidative steps likely performed by oxidoreductases clz3, clz15 and clz16. Finally, in support of the identification of the cluster as being responsible for SQS1 production, the cluster contains a gene encoding a putative squalene synthase (SS) clz20, suggesting a likely mechanism for self-resistance. This chain is Phenylalanine ammonia-lyase, found in Cochliobolus lunatus (Filamentous fungus).